A 712-amino-acid chain; its full sequence is Patatin-like phospholipase domain-containing protein ACLA_029670 (712 aa).

A compositionally biased stretch (polar residues) spans 1–10 (MTSAEKSATR). Positions 1–20 (MTSAEKSATRNIYDPSALPD) are disordered. The helical transmembrane segment at 85 to 105 (WPFLFIVFAWITVLGIAYALT) threads the bilayer. The PNPLA domain occupies 275–466 (LCLSGGATFA…RTDIPIKALN (192 aa)). Residues 306-310 (GTSGG) carry the GXSXG motif. Ser-308 functions as the Nucleophile in the catalytic mechanism. The active-site Proton acceptor is the Asp-453. Positions 649–664 (FPERHSDYKDESHYTE) are enriched in basic and acidic residues. The tract at residues 649–686 (FPERHSDYKDESHYTEVSDSLSTNSSRPHTPDARRGSI) is disordered. A compositionally biased stretch (polar residues) spans 665-676 (VSDSLSTNSSRP). Residues 677–686 (HTPDARRGSI) show a composition bias toward basic and acidic residues.

It belongs to the PLPL family.

It is found in the membrane. Probable lipid hydrolase. The chain is Patatin-like phospholipase domain-containing protein ACLA_029670 from Aspergillus clavatus (strain ATCC 1007 / CBS 513.65 / DSM 816 / NCTC 3887 / NRRL 1 / QM 1276 / 107).